The chain runs to 740 residues: N-acetylated-alpha-linked acidic dipeptidase 2 (740 aa).

The Cytoplasmic segment spans residues 1–7 (MARPRHL). A helical; Signal-anchor for type II membrane protein transmembrane segment spans residues 8–31 (RGLGMCITAVLASFIAGFTVGWFI). Over 32 to 740 (KPLKETTTSA…AAAGTLTNVL (709 aa)) the chain is Extracellular. Residues N111, N143, and N185 are each glycosylated (N-linked (GlcNAc...) asparagine). The substrate site is built by R200 and N247. Ca(2+) is bound by residues T259 and Y262. Positions 264–577 (AKEYTFRLPV…QLRGALVYEL (314 aa)) are NAALADase. The N-linked (GlcNAc...) asparagine glycan is linked to N314. Zn(2+) contacts are provided by H367 and D377. E414 is a binding site for substrate. Residue E414 is the Nucleophile; for NAALADase activity of the active site. E415 serves as a coordination point for Zn(2+). E423 and E426 together coordinate Ca(2+). D443 contacts Zn(2+). N449 carries an N-linked (GlcNAc...) asparagine glycan. Residues 507-508 (SG), 524-526 (RAR), Y542, and 542-543 (YH) each bind substrate. Zn(2+) is bound at residue H543. N-linked (GlcNAc...) asparagine glycosylation is present at N603. Residue S618 is the Charge relay system of the active site. An N-linked (GlcNAc...) asparagine glycan is attached at N628. Active-site charge relay system residues include D656 and H679. 689 to 690 (KY) is a substrate binding site.

Belongs to the peptidase M28 family. M28B subfamily. In terms of assembly, homodimer. The cofactor is Zn(2+). Expressed ovary, testes and lung, but not brain.

The protein resides in the cell membrane. It carries out the reaction Release of an unsubstituted, C-terminal glutamyl residue, typically from Ac-Asp-Glu or folylpoly-gamma-glutamates.. Functionally, has N-acetylated-alpha-linked-acidic dipeptidase (NAALADase) activity. Also exhibits a dipeptidyl-peptidase IV type activity. Inactivates the peptide neurotransmitter N-acetylaspartylglutamate. The sequence is that of N-acetylated-alpha-linked acidic dipeptidase 2 (Naalad2) from Mus musculus (Mouse).